The chain runs to 1256 residues: Nephrin (1256 aa).

Residues 1–35 form the signal peptide; the sequence is MGAKEATVRGPGASPVHRTCHLIPLLLAGMLTTGL. Residues 36–1078 are Extracellular-facing; it reads AQSPVPTSAP…PGPPRLPLLP (1043 aa). 6 consecutive Ig-like C2-type domains span residues 39-144, 149-247, 256-347, 354-448, 454-554, and 558-649; these read PVPT…VILS, PKVL…ASFT, PPVI…RSIT, PSAV…KSLT, PAQK…TQLV, and PPTN…ETVS. N-linked (GlcNAc...) asparagine glycosylation is present at asparagine 54. 3 disulfides stabilise this stretch: cysteine 67–cysteine 125, cysteine 174–cysteine 231, and cysteine 279–cysteine 331. N-linked (GlcNAc...) asparagine glycosylation is found at asparagine 370 and asparagine 415. The cysteines at positions 375 and 431 are disulfide-linked. Position 446 is a phosphoserine (serine 446). The cysteines at positions 479 and 542 are disulfide-linked. The disordered stretch occupies residues 491–516; it reads TWLKDSRPVNDPRQSQEPRRVQLGSV. Residues 494 to 510 are compositionally biased toward basic and acidic residues; the sequence is KDSRPVNDPRQSQEPRR. N-linked (GlcNAc...) asparagine glycans are attached at residues asparagine 561, asparagine 578, asparagine 591, and asparagine 722. The cysteines at positions 581 and 637 are disulfide-linked. 2 consecutive Ig-like C2-type domains span residues 754–846 and 852–953; these read PTIR…LVRL and PQVD…VSIS. Intrachain disulfides connect cysteine 775–cysteine 830 and cysteine 877–cysteine 934. A Fibronectin type-III domain is found at 957–1051; that stretch reads PPLGLKVVSV…GIQVSITTPG (95 aa). Positions 1048-1071 are disordered; sequence TTPGLDQAPEDTDQPLPTEQPPGP. A helical membrane pass occupies residues 1079-1099; that stretch reads VLFAVGGLLLLSNASCVGGLL. The Cytoplasmic portion of the chain corresponds to 1100 to 1256; that stretch reads WRRRLRRLAE…LPFELRGHLV (157 aa). Serine 1112 is subject to Phosphoserine. A compositionally biased stretch (basic and acidic residues) spans 1112–1128; it reads SEKTEAGSEEDRIRNEY. The tract at residues 1112-1143 is disordered; sequence SEKTEAGSEEDRIRNEYEESQWTGDRDTRSST. Threonine 1115 is modified (phosphothreonine). A Phosphoserine modification is found at serine 1119. Tyrosine 1208 is modified (phosphotyrosine; by FYN).

It belongs to the immunoglobulin superfamily. Interacts with NPHS2 and with CD2AP (via C-terminal domain). Interacts with MAGI1 (via PDZ 2 and 3 domains) forming a tripartite complex with IGSF5/JAM4. Forms a complex with ACTN4, CASK, IQGAP1, MAGI2, SPTAN1 and SPTBN1. Interacts with DDN; the interaction is direct. Self-associates (via the Ig-like domains). Also interacts (via the Ig-like domains) with KIRREL1 and KIRREL2; the interaction with KIRREL1 is dependent on KIRREL1 glycosylation. Interacts with KIRREL3. Interacts with phosphatidylinositol 3-kinase regulatory subunit PIK3R1; the interaction is reduced by high glucose levels. Phosphorylated at Tyr-1208 by FYN, leading to the recruitment and activation of phospholipase C-gamma-1/PLCG1. Tyrosine phosphorylation is reduced by high glucose levels. Dephosphorylated by tensin TNS2 which leads to reduced binding of NPHN1 to PIK3R1. As to expression, expressed in kidney glomeruli. In the embryo, expressed in the mesonephric kidney at 11 dpc with strong expression in cranial tubules with podocyte-like structures. Expression is observed in the podocytes of the developing kidney from 13 dpc. High expression is also detected in the developing cerebellum, hindbrain, spinal cord, retina and hypothalamus. Expressed in skeletal muscle during myoblast fusion such as in the adult following acute injury and in the embryo but not detected in uninjured adult skeletal muscle. Isoform 1 and isoform 2 are expressed in the newborn brain and developing cerebellum. Isoform 1 is the predominant isoform in adult kidney.

The protein localises to the cell membrane. Seems to play a role in the development or function of the kidney glomerular filtration barrier. Regulates glomerular vascular permeability. May anchor the podocyte slit diaphragm to the actin cytoskeleton. Plays a role in skeletal muscle formation through regulation of myoblast fusion. The chain is Nephrin (Nphs1) from Mus musculus (Mouse).